The following is a 175-amino-acid chain: Protein her-1 (175 aa).

Residues 1-18 (MRYLPIFVFLGSFGYTET) form the signal peptide. N-linked (GlcNAc...) asparagine glycans are attached at residues asparagine 98 and asparagine 163.

It is found in the secreted. Its function is as follows. Dictates male development. Probably plays a direct role in cell signaling during C.elegans sex determination. Inhibits the function of tra-2a. The protein is Protein her-1 (her-1) of Caenorhabditis elegans.